The chain runs to 451 residues: Prenyltransferase asqH1 (451 aa).

The tract at residues 14-37 is disordered; sequence AEDQSTRKVHWGQEGSGQSPEARP. An L-tryptophan-binding site is contributed by Glu-120. Residues Arg-137, Arg-274, Lys-276, Tyr-278, and Tyr-373 each contribute to the substrate site.

It belongs to the tryptophan dimethylallyltransferase family.

The catalysed reaction is quinolinone B + dimethylallyl diphosphate = peniprequinolone + diphosphate. It functions in the pathway secondary metabolite biosynthesis. Its pathway is alkaloid biosynthesis. It participates in mycotoxin biosynthesis. In terms of biological role, prenyltransferase; part of the gene cluster that mediates the biosynthesis of the aspoquinolone mycotoxins. Within the pathway, the prenyltransferase asqH1 catalyzes the canonical Friedel-Crafts alkylation of quinolinone B with dimethylallyl cation to yield dimethylallyl quinolone. The first step of the pathway is catalyzed by the nonribosomal peptide synthetase asqK that condenses anthranilic acid and O-methyl-L-tyrosine to produce 4'-methoxycyclopeptin. 4'-methoxycyclopeptin is then converted to 4'-methoxydehydrocyclopeptin by the ketoglutarate-dependent dioxygenase asqJ. AsqJ also converts its first product 4'-methoxydehydrocyclopeptin to 4'-methoxycyclopenin. The following conversion of 4'-methoxycyclopenin into 4'-methoxyviridicatin is catalyzed by the cyclopenase asqI. 4'-methoxyviridicatin is the precursor of quinolone natural products, and is further converted to quinolinone B. The prenyltransferase asqH1 then catalyzes the canonical Friedel-Crafts alkylation of quinolinone B with dimethylallyl cation to yield dimethylallyl quinolone, which is subjected to FAD-dependent dehydrogenation by the FAD-linked oxidoreductase asqF to yield conjugated aryl diene. The delta(3') double bond then serves as the site of the second alkylation with DMAPP catalyzed by the prenyltransferase asqH2 to yield a carbenium ion intermediate, which can be attacked by H(2)O to yield a styrenyl quinolone containing a C3'-hydroxyprenyl chain. The FAD-dependent monooxygenase asqG performs epoxidation of the terminal C7'-C8' olefin. Finally, after dehydratation of the epoxide at C3 by asqC, the quinolone epoxide rearrangement protein asqO catalyzes an enzymatic 3-exo-tet cyclization to yield the cyclopropyl-THF ring system in aspoquinolone. This chain is Prenyltransferase asqH1, found in Emericella nidulans (strain FGSC A4 / ATCC 38163 / CBS 112.46 / NRRL 194 / M139) (Aspergillus nidulans).